The following is a 162-amino-acid chain: ATP synthase subunit b (162 aa).

A helical transmembrane segment spans residues 6–25; that stretch reads TLFTLVTFLVLMLAVGKVAW.

It belongs to the ATPase B chain family. As to quaternary structure, F-type ATPases have 2 components, F(1) - the catalytic core - and F(0) - the membrane proton channel. F(1) has five subunits: alpha(3), beta(3), gamma(1), delta(1), epsilon(1). F(0) has three main subunits: a(1), b(2) and c(10-14). The alpha and beta chains form an alternating ring which encloses part of the gamma chain. F(1) is attached to F(0) by a central stalk formed by the gamma and epsilon chains, while a peripheral stalk is formed by the delta and b chains.

It localises to the cell membrane. Functionally, f(1)F(0) ATP synthase produces ATP from ADP in the presence of a proton or sodium gradient. F-type ATPases consist of two structural domains, F(1) containing the extramembraneous catalytic core and F(0) containing the membrane proton channel, linked together by a central stalk and a peripheral stalk. During catalysis, ATP synthesis in the catalytic domain of F(1) is coupled via a rotary mechanism of the central stalk subunits to proton translocation. Component of the F(0) channel, it forms part of the peripheral stalk, linking F(1) to F(0). This is ATP synthase subunit b from Lacticaseibacillus casei (strain BL23) (Lactobacillus casei).